The following is a 414-amino-acid chain: uncharacterized protein (414 aa).

The protein belongs to the UbiH/COQ6 family. The cofactor is FAD.

This is an uncharacterized protein from Synechocystis sp. (strain ATCC 27184 / PCC 6803 / Kazusa).